The chain runs to 115 residues: NADH-ubiquinone oxidoreductase chain 3 (115 aa).

The next 3 membrane-spanning stretches (helical) occupy residues 5 to 25 (LTLMTDVALALLLVMIAFWLP), 55 to 75 (FFLVAITFLLFDLEIALLLPL), and 86 to 106 (LMLTMALLLISILAAGLAYEW).

Belongs to the complex I subunit 3 family. As to quaternary structure, core subunit of respiratory chain NADH dehydrogenase (Complex I) which is composed of 45 different subunits. Interacts with TMEM186. Interacts with TMEM242.

The protein resides in the mitochondrion inner membrane. It catalyses the reaction a ubiquinone + NADH + 5 H(+)(in) = a ubiquinol + NAD(+) + 4 H(+)(out). Its function is as follows. Core subunit of the mitochondrial membrane respiratory chain NADH dehydrogenase (Complex I) which catalyzes electron transfer from NADH through the respiratory chain, using ubiquinone as an electron acceptor. Essential for the catalytic activity of complex I. In Avahi cleesei (Cleese's woolly lemur), this protein is NADH-ubiquinone oxidoreductase chain 3.